The following is a 1520-amino-acid chain: MKIRIVSLIVLGFLIGCKHESIITPTVPADGSGGNALNPGLVGGYLPDIGVPDPIISLSMTLDGNLKFDSSLLCNDQDASHFQISQKDNVFCTINGRSIATFTAPFDANKNGRNTDSEVLSLISADEYRDSPVRQENLQILMKNMATIHGDKISLVFRSTLDALTFENYLRHNLDLPKDQFLEAITEKIANDNQVDKQPSTHVPNISPSFTPGTSSNLNSPFVSANAEESLSYIPTDVIPSLGRLLDSQGRVINGVSYFSNNTRGITGVDKTGAILNDGSFEFSWGDIISFSIDTFELGSTRANKTDFYISELGKDNEGKNAEALIHRYASIDDSKLIIPDKVTQIFSLYPNVINEVISLSLPNGDIELDIGDGKTQIVPGEFFKQFDSGLAALIDQSISPISRFKFEDSLPKKKSAIDSESSQIQDIINKLWGATDTVQANGWKKVDRFHIFHDSTNFYGSTGSARAQAAVNIANSAFPVLMARNDNNYWIDFGKPKAWDSNSLAFITEAPSTVVPDKVSEDTSTFNLPFISLGEIGKGKLMVLGNARYNSVLVCPNGFSWGGTVKNGTCSLSSDRDDMANFFSNVIRYLTGSTSNDVIVGTNIPEVYFKSSGQTMGSKANFELDSRFSKQTQQLTSFHDLDVNTIPLIIINAYDYKGKNINSPYDIPLSADVGSPKLSRSDVTDLIDYINNGGSVLMMETIINTNNSEISRLLDSAGIAFGIGNSVVADGNGPSGGHPDRPRSQREHGIWVIERYAAVEDESSGQQTLPYVINSDGSIEWKYIVENRPDDKPKLEVASWVESEAGDKLITHYAFIDESQHWKKDISGKIIYNVAGKPEVDNASLSLAKNKVLDAFKNSSGQRAYSECKNSEFHYEINCLEYRPGNSIPITGGLYVPRYTDIKLGESEANAMVKAANLGTNIHALYQHERYFRTKGKSGARLNSVDLNRIYQNMSVWLWNDLDYRYDDKQSDELGFKVFTQYLNCYTSNNAGGNTTCPEELKDELTQLGMIYDEKSGSYAGQMDPSYPLNYMEKPLTRLMLGRSFWDLDIKVDVRKYPGEVTTRSGGGDITLDMRNNTAAWFAGNRQPTGQWAEAHQPFSVSVSGETSPVTITIALADDLTGREKHELGLKRPPRMSKSFVIGGDSPKMQTFTVPYGGLIYAQGGNSQQVKLTFSGTIDAPLYIDGKWRNPLLSGAPIGEVVSDTFIFTAPKANLNADGYLGGIEQFAKDLDQFSADLNDFYARDEGADGDKNRKATDKSMPNNRHHFVNDVAISVGAAHSGYPVMNDSFITSSRSLNTMPLNSWLLWHEVGHNSAEAPFNVDGATEVVNNLLALYMQDRHQGKMSRVEQDIRYAFDFVNAEHGHAWGAGGAGERLVMFAQLKEWAETEFDINDWYNDKLPGFYIEESGIKGWNLFKLMHRLMRNENDDQINMKGENQCKISGIGKSDLLMLCASYAAQTDLSEFFKAWNPGSKAFLYPDDPQPYYEGGITPSGIQRVKSLKLNLPQKNPLSINSVTQH.

The N-terminal stretch at 1–16 is a signal peptide; that stretch reads MKIRIVSLIVLGFLIG. Residue Cys17 is the site of N-palmitoyl cysteine attachment. Cys17 carries the S-diacylglycerol cysteine lipid modification. The region spanning 1085 to 1388 is the Peptidase M60 domain; sequence GNRQPTGQWA…MFAQLKEWAE (304 aa).

The protein resides in the cell membrane. In Vibrio cholerae serotype O1 (strain ATCC 39315 / El Tor Inaba N16961), this protein is Accessory colonization factor AcfD (acfD).